The following is a 419-amino-acid chain: G protein-activated inward rectifier potassium channel 4 (419 aa).

Residues 1–86 (MAGDSRNAMN…LFTTLVDLKW (86 aa)) lie on the Cytoplasmic side of the membrane. Ser5 is modified (phosphoserine). Residues 87–111 (RFNLLVFTMVYTITWLFFGFIWWLI) form a helical membrane-spanning segment. Over 112 to 135 (AYVRGDLDHVGDQEWIPCVENLSG) the chain is Extracellular. The helical; Pore-forming intramembrane region spans 136–147 (FVSAFLFSIETE). Positions 148–154 (TTIGYGF) form an intramembrane region, pore-forming. The Selectivity filter motif lies at 149 to 154 (TIGYGF). The Extracellular segment spans residues 155–163 (RVITEKCPE). Residues 164–185 (GIILLLVQAILGSIVNAFMVGC) traverse the membrane as a helical segment. Residues 186–419 (MFVKISQPKK…SVSQATRGSM (234 aa)) lie on the Cytoplasmic side of the membrane. Residues 388-419 (GCAEAGNEAEAEKDEEGEPNGLSVSQATRGSM) form a disordered region. Acidic residues predominate over residues 394 to 405 (NEAEAEKDEEGE). Residues 409–419 (LSVSQATRGSM) show a composition bias toward polar residues.

It belongs to the inward rectifier-type potassium channel (TC 1.A.2.1) family. KCNJ5 subfamily. As to quaternary structure, associates with KCNJ3/GIRK1 to form a G-protein-activated heteromultimer pore-forming unit. Associates with KCNJ6/GRIK2 to form a G-protein-activated heteromultimer pore-forming unit. In terms of tissue distribution, expressed in the heart.

Its subcellular location is the membrane. It carries out the reaction K(+)(in) = K(+)(out). With respect to regulation, heteromultimer composed of KCNJ3/GIRK1 and KCNJ5/GIRK4 is activated by phosphatidylinositol 4,5 biphosphate (PtdIns(4,5)P2). Its function is as follows. Inward rectifier potassium channels are characterized by a greater tendency to allow potassium to flow into the cell rather than out of it. Their voltage dependence is regulated by the concentration of extracellular potassium; as external potassium is raised, the voltage range of the channel opening shifts to more positive voltages. The inward rectification is mainly due to the blockage of outward current by internal magnesium. Can be blocked by external barium. This potassium channel is controlled by G proteins. Forms a functional channel in association with KCNJ3/GIRK1. This Mus musculus (Mouse) protein is G protein-activated inward rectifier potassium channel 4 (Kcnj5).